A 383-amino-acid polypeptide reads, in one-letter code: Succinate--CoA ligase [ADP-forming] subunit beta (383 aa).

Residues 9–236 (KELLGRFGLR…VEAADPQEHR (228 aa)) form the ATP-grasp domain. Residues K45, 52 to 54 (GRG), E91, A94, and E99 each bind ATP. N191 and D205 together coordinate Mg(2+). Substrate-binding positions include N256 and 313–315 (GIT).

It belongs to the succinate/malate CoA ligase beta subunit family. Heterotetramer of two alpha and two beta subunits. It depends on Mg(2+) as a cofactor.

It carries out the reaction succinate + ATP + CoA = succinyl-CoA + ADP + phosphate. It catalyses the reaction GTP + succinate + CoA = succinyl-CoA + GDP + phosphate. It functions in the pathway carbohydrate metabolism; tricarboxylic acid cycle; succinate from succinyl-CoA (ligase route): step 1/1. Functionally, succinyl-CoA synthetase functions in the citric acid cycle (TCA), coupling the hydrolysis of succinyl-CoA to the synthesis of either ATP or GTP and thus represents the only step of substrate-level phosphorylation in the TCA. The beta subunit provides nucleotide specificity of the enzyme and binds the substrate succinate, while the binding sites for coenzyme A and phosphate are found in the alpha subunit. The protein is Succinate--CoA ligase [ADP-forming] subunit beta of Rubrobacter xylanophilus (strain DSM 9941 / JCM 11954 / NBRC 16129 / PRD-1).